The primary structure comprises 216 residues: Thymidylate kinase (216 aa).

Gly-9–Thr-16 is an ATP binding site.

The protein belongs to the thymidylate kinase family.

The enzyme catalyses dTMP + ATP = dTDP + ADP. Phosphorylation of dTMP to form dTDP in both de novo and salvage pathways of dTTP synthesis. The chain is Thymidylate kinase from Syntrophotalea carbinolica (strain DSM 2380 / NBRC 103641 / GraBd1) (Pelobacter carbinolicus).